The following is a 507-amino-acid chain: Maturase K (507 aa).

It belongs to the intron maturase 2 family. MatK subfamily.

It is found in the plastid. The protein localises to the chloroplast. Functionally, usually encoded in the trnK tRNA gene intron. Probably assists in splicing its own and other chloroplast group II introns. This is Maturase K from Nymphaea alba (White water-lily).